Consider the following 490-residue polypeptide: Serine/threonine-protein kinase PBL35 (490 aa).

Disordered stretches follow at residues 1–39 and 80–103; these read MGFD…RNSE and SAIV…SNAE. Residues 14–39 are a coiled coil; that stretch reads SKTSNENEKKKKKRRRKKNNNVRNSE. The span at 23–33 shows a compositional bias: basic residues; it reads KKKKRRRKKNN. Low complexity predominate over residues 94–103; it reads SSTTTTSNAE. The region spanning 136–422 is the Protein kinase domain; the sequence is FRPESLLGEG…VEVLKPLPHL (287 aa). Residues 142 to 150 and K174 each bind ATP; that span reads LGEGGFGCV. A Phosphotyrosine modification is found at Y219. The active-site Proton acceptor is D269. 2 positions are modified to phosphoserine: S273 and S303. T304 and T309 each carry phosphothreonine. Y317 bears the Phosphotyrosine mark. The segment at 442 to 490 is disordered; that stretch reads AGSGSGSGRGFGSRNGQPVFRTLSSPHGQAGSSPYRHQIPSPKPKGATT. Gly residues predominate over residues 444-454; it reads SGSGSGRGFGS. Residues 463–473 are compositionally biased toward polar residues; sequence TLSSPHGQAGS.

This sequence belongs to the protein kinase superfamily. Ser/Thr protein kinase family. Interacts with SD129. Post-translationally, phosphorylated by SD129 in response to the pathogen-associated molecular pattern (PAMP) 3-OH-C10:0, a medium-chain 3-hydroxy fatty acid.

It localises to the cell membrane. The enzyme catalyses L-seryl-[protein] + ATP = O-phospho-L-seryl-[protein] + ADP + H(+). The catalysed reaction is L-threonyl-[protein] + ATP = O-phospho-L-threonyl-[protein] + ADP + H(+). Its function is as follows. Involved in chitin-triggered immune signaling and is required for reactive oxygen species (ROS) production. Acts downstream of SD129 in defense signaling triggered by the pathogen-associated molecular pattern (PAMP) 3-OH-C10:0, a medium-chain 3-hydroxy fatty acid. This Arabidopsis thaliana (Mouse-ear cress) protein is Serine/threonine-protein kinase PBL35.